A 974-amino-acid polypeptide reads, in one-letter code: Ephrin type-B receptor 3 (974 aa).

An N-terminal signal peptide occupies residues methionine 1–glycine 16. The Extracellular portion of the chain corresponds to leucine 17–methionine 534. Residues glutamate 18–alanine 196 enclose the Eph LBD domain. A disulfide bridge links cysteine 60 with cysteine 178. Fibronectin type-III domains follow at residues valine 318–alanine 426 and alanine 427–aspartate 522. Asparagine 330 and asparagine 420 each carry an N-linked (GlcNAc...) asparagine glycan. The helical transmembrane segment at valine 535–valine 555 threads the bilayer. The Cytoplasmic portion of the chain corresponds to cysteine 556–valine 974. A Phosphotyrosine; by autocatalysis modification is found at tyrosine 590. The 264-residue stretch at valine 609–isoleucine 872 folds into the Protein kinase domain. ATP-binding positions include isoleucine 615 to valine 623 and lysine 641. Aspartate 734 serves as the catalytic Proton acceptor. An SAM domain is found at threonine 901–glutamine 965. Residues valine 972–valine 974 carry the PDZ-binding motif.

The protein belongs to the protein kinase superfamily. Tyr protein kinase family. Ephrin receptor subfamily. In terms of assembly, heterotetramer upon binding of the ligand. The heterotetramer is composed of an ephrin dimer and a receptor dimer. Oligomerization is probably required to induce biological responses. Post-translationally, phosphorylated. Autophosphorylates upon ligand-binding. Autophosphorylation on Tyr-590 is required for interaction with SH2 domain-containing proteins. As to expression, expressed in the embryo in pre-somitic mesoderm, caudal somites, midbrain, and cement gland. Most abundant in adult brain, eye, heart, lung and ovary. Lower levels in intestine, kidney, oviduct and pharynx.

It localises to the cell membrane. It is found in the cell projection. Its subcellular location is the dendrite. It carries out the reaction L-tyrosyl-[protein] + ATP = O-phospho-L-tyrosyl-[protein] + ADP + H(+). Functionally, receptor tyrosine kinase which binds promiscuously transmembrane ephrin-B family ligands residing on adjacent cells, leading to contact-dependent bidirectional signaling into neighboring cells. The signaling pathway downstream of the receptor is referred to as forward signaling while the signaling pathway downstream of the ephrin ligand is referred to as reverse signaling. Generally has an overlapping and redundant function with EPHB2. Like EPHB2, functions in axon guidance during development. In addition to its role in axon guidance also plays an important redundant role with other ephrin-B receptors in development and maturation of dendritic spines and the formation of excitatory synapses. May control other aspects of development through regulation of cell migration and positioning. In Xenopus laevis (African clawed frog), this protein is Ephrin type-B receptor 3 (ephb3).